We begin with the raw amino-acid sequence, 212 residues long: Stringent starvation protein A (212 aa).

The region spanning 9–87 (SVMTLFSGPT…YLDERFPHPP (79 aa)) is the GST N-terminal domain. The GST C-terminal domain occupies 92 to 209 (YPVARGESRL…LTEAEREMRL (118 aa)).

Belongs to the GST superfamily. HSP26 family.

Functionally, forms an equimolar complex with the RNA polymerase holoenzyme (RNAP) but not with the core enzyme. The polypeptide is Stringent starvation protein A (sspA) (Escherichia coli O157:H7).